The primary structure comprises 139 residues: ATP synthase epsilon chain (139 aa).

The protein belongs to the ATPase epsilon chain family. In terms of assembly, F-type ATPases have 2 components, CF(1) - the catalytic core - and CF(0) - the membrane proton channel. CF(1) has five subunits: alpha(3), beta(3), gamma(1), delta(1), epsilon(1). CF(0) has three main subunits: a, b and c.

Its subcellular location is the cell inner membrane. Its function is as follows. Produces ATP from ADP in the presence of a proton gradient across the membrane. In Shigella boydii serotype 18 (strain CDC 3083-94 / BS512), this protein is ATP synthase epsilon chain.